Reading from the N-terminus, the 307-residue chain is MTVTAAMVKELREKTGAGMMDCKKALAETNGDMEAAIDWLRAKGIAKADKKSGRTAAEGLIGIASAGAKAVVVEINSETDFVARNDAFQELVRGVANVALGTDGSVAAVSKATYPATGKSVEDTIKDAIATIGENMTLRRSAMLEVEDGVVATYVHNAAGEGIGKLGVLVALKSSGDKEALNAIGRQVAMHVAATNPLAVRSSEIDPAVAERERNVFIEQSRASGKPDNIIEKMVDGRMRKFFEEVALLSQAFVMNPDQTVEAAIKEAEKSVGAPIEVAGIARLLLGEGVEKEESDFAAEVAAAAKG.

The segment at 79–82 (TDFV) is involved in Mg(2+) ion dislocation from EF-Tu.

The protein belongs to the EF-Ts family.

Its subcellular location is the cytoplasm. Its function is as follows. Associates with the EF-Tu.GDP complex and induces the exchange of GDP to GTP. It remains bound to the aminoacyl-tRNA.EF-Tu.GTP complex up to the GTP hydrolysis stage on the ribosome. This chain is Elongation factor Ts, found in Sinorhizobium medicae (strain WSM419) (Ensifer medicae).